Here is a 375-residue protein sequence, read N- to C-terminus: Protein RecA (375 aa).

Residues 1–20 (MPAEMKSAASGSDPRSSGER) are disordered. 79-86 (GPESSGKT) lines the ATP pocket.

Belongs to the RecA family.

It is found in the cytoplasm. In terms of biological role, can catalyze the hydrolysis of ATP in the presence of single-stranded DNA, the ATP-dependent uptake of single-stranded DNA by duplex DNA, and the ATP-dependent hybridization of homologous single-stranded DNAs. It interacts with LexA causing its activation and leading to its autocatalytic cleavage. This is Protein RecA from Parasynechococcus marenigrum (strain WH8102).